Here is a 1199-residue protein sequence, read N- to C-terminus: DNA-directed RNA polymerase subunit beta' (1199 aa).

Zn(2+) contacts are provided by cysteine 60, cysteine 62, cysteine 75, and cysteine 78. Mg(2+) contacts are provided by aspartate 449, aspartate 451, and aspartate 453. Zn(2+) contacts are provided by cysteine 818, cysteine 892, cysteine 899, and cysteine 902.

It belongs to the RNA polymerase beta' chain family. The RNAP catalytic core consists of 2 alpha, 1 beta, 1 beta' and 1 omega subunit. When a sigma factor is associated with the core the holoenzyme is formed, which can initiate transcription. Requires Mg(2+) as cofactor. The cofactor is Zn(2+).

The enzyme catalyses RNA(n) + a ribonucleoside 5'-triphosphate = RNA(n+1) + diphosphate. Its function is as follows. DNA-dependent RNA polymerase catalyzes the transcription of DNA into RNA using the four ribonucleoside triphosphates as substrates. This chain is DNA-directed RNA polymerase subunit beta', found in Geobacillus kaustophilus (strain HTA426).